A 469-amino-acid polypeptide reads, in one-letter code: ATP synthase subunit beta (469 aa).

156 to 163 contributes to the ATP binding site; it reads GGAGVGKT.

It belongs to the ATPase alpha/beta chains family. In terms of assembly, F-type ATPases have 2 components, CF(1) - the catalytic core - and CF(0) - the membrane proton channel. CF(1) has five subunits: alpha(3), beta(3), gamma(1), delta(1), epsilon(1). CF(0) has three main subunits: a(1), b(2) and c(9-12). The alpha and beta chains form an alternating ring which encloses part of the gamma chain. CF(1) is attached to CF(0) by a central stalk formed by the gamma and epsilon chains, while a peripheral stalk is formed by the delta and b chains.

The protein localises to the cell membrane. The enzyme catalyses ATP + H2O + 4 H(+)(in) = ADP + phosphate + 5 H(+)(out). In terms of biological role, produces ATP from ADP in the presence of a proton gradient across the membrane. The catalytic sites are hosted primarily by the beta subunits. The polypeptide is ATP synthase subunit beta (Bacillus mycoides (strain KBAB4) (Bacillus weihenstephanensis)).